A 469-amino-acid polypeptide reads, in one-letter code: 3-isopropylmalate dehydratase large subunit (469 aa).

C347, C408, and C411 together coordinate [4Fe-4S] cluster.

It belongs to the aconitase/IPM isomerase family. LeuC type 1 subfamily. In terms of assembly, heterodimer of LeuC and LeuD. Requires [4Fe-4S] cluster as cofactor.

The enzyme catalyses (2R,3S)-3-isopropylmalate = (2S)-2-isopropylmalate. It functions in the pathway amino-acid biosynthesis; L-leucine biosynthesis; L-leucine from 3-methyl-2-oxobutanoate: step 2/4. Functionally, catalyzes the isomerization between 2-isopropylmalate and 3-isopropylmalate, via the formation of 2-isopropylmaleate. This Actinobacillus succinogenes (strain ATCC 55618 / DSM 22257 / CCUG 43843 / 130Z) protein is 3-isopropylmalate dehydratase large subunit.